The primary structure comprises 237 residues: ATP synthase subunit a (237 aa).

4 helical membrane passes run 17 to 37, 78 to 98, 178 to 198, and 201 to 221; these read LSDM…AVAA, LGVT…PFWL, ILLG…CGSI, and MVIM…AFIF.

The protein belongs to the ATPase A chain family. In terms of assembly, F-type ATPases have 2 components, CF(1) - the catalytic core - and CF(0) - the membrane proton channel. CF(1) has five subunits: alpha(3), beta(3), gamma(1), delta(1), epsilon(1). CF(0) has three main subunits: a(1), b(2) and c(9-12). The alpha and beta chains form an alternating ring which encloses part of the gamma chain. CF(1) is attached to CF(0) by a central stalk formed by the gamma and epsilon chains, while a peripheral stalk is formed by the delta and b chains.

It localises to the cell membrane. Its function is as follows. Key component of the proton channel; it plays a direct role in the translocation of protons across the membrane. In Bacillus caldotenax, this protein is ATP synthase subunit a.